A 468-amino-acid chain; its full sequence is Adenosylhomocysteinase (468 aa).

Substrate-binding residues include Thr-63, Asp-139, and Glu-164. 165–167 (TTT) provides a ligand contact to NAD(+). Lys-194 and Asp-198 together coordinate substrate. NAD(+) is bound by residues Asn-199, 228 to 233 (GYGDVG), Glu-251, Asn-300, 321 to 323 (IGH), and Asn-374.

The protein belongs to the adenosylhomocysteinase family. Requires NAD(+) as cofactor.

It localises to the cytoplasm. The enzyme catalyses S-adenosyl-L-homocysteine + H2O = L-homocysteine + adenosine. The protein operates within amino-acid biosynthesis; L-homocysteine biosynthesis; L-homocysteine from S-adenosyl-L-homocysteine: step 1/1. Its function is as follows. May play a key role in the regulation of the intracellular concentration of adenosylhomocysteine. This is Adenosylhomocysteinase from Stutzerimonas stutzeri (strain A1501) (Pseudomonas stutzeri).